We begin with the raw amino-acid sequence, 446 residues long: COBRA-like protein 1 (446 aa).

A signal peptide spans 1-28 (MALLLLRMGVSVALLVAFFSSLIPSSEA). 9 N-linked (GlcNAc...) asparagine glycosylation sites follow: Asn-37, Asn-162, Asn-170, Asn-209, Asn-234, Asn-316, Asn-331, Asn-350, and Asn-419. Residue Ala-420 is the site of GPI-anchor amidated alanine attachment. Positions 421–446 (STRVMSSILLPFITIWTALTFLMVYA) are cleaved as a propeptide — removed in mature form.

The protein belongs to the COBRA family.

The protein resides in the cell membrane. Involved in determining the orientation of cell expansion, probably by playing an important role in cellulose deposition. May act by recruiting cellulose synthesizing complexes to discrete positions on the cell surface. In Oryza sativa subsp. japonica (Rice), this protein is COBRA-like protein 1 (BC1L6).